A 145-amino-acid polypeptide reads, in one-letter code: MKAKHQRLILAVAALCGVAGAGVLAASALRDEAAYFRTPVEIAGGKAAVGEAMRLGGMVAKGSIVRQADGLTIRFVATDGQASVPVEYTGIVPDLFGEESGMIADGRMRADGTFVADRILAKHDERYMPPQMGEMPKNMKAAVEG.

Residues 1 to 7 (MKAKHQR) lie on the Cytoplasmic side of the membrane. The helical; Signal-anchor for type II membrane protein transmembrane segment at 8-28 (LILAVAALCGVAGAGVLAASA) threads the bilayer. Over 29–145 (LRDEAAYFRT…PKNMKAAVEG (117 aa)) the chain is Periplasmic. Heme-binding residues include H123 and Y127.

The protein belongs to the CcmE/CycJ family.

It localises to the cell inner membrane. Heme chaperone required for the biogenesis of c-type cytochromes. Transiently binds heme delivered by CcmC and transfers the heme to apo-cytochromes in a process facilitated by CcmF and CcmH. This Sphingopyxis alaskensis (strain DSM 13593 / LMG 18877 / RB2256) (Sphingomonas alaskensis) protein is Cytochrome c-type biogenesis protein CcmE.